The sequence spans 196 residues: Imidazole glycerol phosphate synthase subunit HisH (196 aa).

In terms of domain architecture, Glutamine amidotransferase type-1 spans 2-196 (KVAVVKYNAG…ERVLRNFLDL (195 aa)). Catalysis depends on Cys-77, which acts as the Nucleophile. Catalysis depends on residues His-178 and Glu-180.

As to quaternary structure, heterodimer of HisH and HisF.

The protein localises to the cytoplasm. It catalyses the reaction 5-[(5-phospho-1-deoxy-D-ribulos-1-ylimino)methylamino]-1-(5-phospho-beta-D-ribosyl)imidazole-4-carboxamide + L-glutamine = D-erythro-1-(imidazol-4-yl)glycerol 3-phosphate + 5-amino-1-(5-phospho-beta-D-ribosyl)imidazole-4-carboxamide + L-glutamate + H(+). It carries out the reaction L-glutamine + H2O = L-glutamate + NH4(+). The protein operates within amino-acid biosynthesis; L-histidine biosynthesis; L-histidine from 5-phospho-alpha-D-ribose 1-diphosphate: step 5/9. IGPS catalyzes the conversion of PRFAR and glutamine to IGP, AICAR and glutamate. The HisH subunit catalyzes the hydrolysis of glutamine to glutamate and ammonia as part of the synthesis of IGP and AICAR. The resulting ammonia molecule is channeled to the active site of HisF. The protein is Imidazole glycerol phosphate synthase subunit HisH of Bacteroides thetaiotaomicron (strain ATCC 29148 / DSM 2079 / JCM 5827 / CCUG 10774 / NCTC 10582 / VPI-5482 / E50).